Reading from the N-terminus, the 1203-residue chain is Protein patched homolog 2 (1203 aa).

Topologically, residues 1–57 are cytoplasmic; that stretch reads MTRSPPLRELPPSYTPPARTAAPQILAGSLKAPLWLRAYFQGLLFSLGCGIQRHCGK. The chain crosses the membrane as a helical span at residues 58–78; it reads VLFLGLLAFGALALGLRMAII. The Extracellular segment spans residues 79–392; sequence ETNLEQLWVE…LDDILHAFSE (314 aa). Residue N370 is glycosylated (N-linked (GlcNAc...) asparagine). A helical membrane pass occupies residues 393–413; sequence VSAARVVGGYLLMLAYACVTM. Residues 394-552 enclose the SSD domain; the sequence is SAARVVGGYL…MLVFPAILSL (159 aa). Over 414-428 the chain is Cytoplasmic; that stretch reads LRWDCAQSQGSVGLA. Residues 429 to 449 traverse the membrane as a helical segment; it reads GVLLVALAVASGLGLCALLGI. Over 450–457 the chain is Extracellular; it reads TFNAATTQ. The chain crosses the membrane as a helical span at residues 458–478; it reads VLPFLALGIGVDDVFLLAHAF. Residues 479–501 lie on the Cytoplasmic side of the membrane; that stretch reads TEALPGTPLQERMGECLQRTGTS. Residues 502-522 form a helical membrane-spanning segment; that stretch reads VVLTSINNMAAFLMAALVPIP. At 523-531 the chain is on the extracellular side; the sequence is ALRAFSLQA. The chain crosses the membrane as a helical span at residues 532 to 552; that stretch reads AIVVGCTFVAVMLVFPAILSL. The Cytoplasmic portion of the chain corresponds to 553-686; that stretch reads DLRRRHCQRL…APLLLQSHAK (134 aa). The helical transmembrane segment at 687–707 threads the bilayer; the sequence is AIVLVLFGALLGLSLYGATLV. Residues 708-963 lie on the Extracellular side of the membrane; sequence QDGLALTDVV…WEQYLGLRRC (256 aa). N-linked (GlcNAc...) asparagine glycosylation is present at N812. Residues 964 to 984 form a helical membrane-spanning segment; it reads FLLAVCILLVCTFLVCALLLL. Residues 985 to 991 lie on the Cytoplasmic side of the membrane; that stretch reads NPWTAGL. Residues 992–1012 form a helical membrane-spanning segment; that stretch reads IVLVLAMMTVELFGIMGFLGI. Residue K1013 is a topological domain, extracellular. Residues 1014–1034 form a helical membrane-spanning segment; that stretch reads LSAIPVVILVASVGIGVEFTV. The Cytoplasmic segment spans residues 1035–1064; that stretch reads HVALGFLTTQGSRNLRAAHALEHTFAPVTD. Residues 1065-1085 traverse the membrane as a helical segment; sequence GAISTLLGLLMLAGSHFDFIV. The Extracellular portion of the chain corresponds to 1086-1093; the sequence is RYFFAALT. Residues 1094–1114 traverse the membrane as a helical segment; the sequence is VLTLLGLLHGLVLLPVLLSIL. At 1115 to 1203 the chain is on the cytoplasmic side; it reads GPPPEVIQMY…SSRGPGPATG (89 aa). Positions 1171 to 1203 are disordered; that stretch reads GAYIHPAPDEPPWSPAATSSGNLSSRGPGPATG. The span at 1186–1195 shows a compositional bias: polar residues; that stretch reads AATSSGNLSS.

Belongs to the patched family.

The protein resides in the membrane. Functionally, plays a role in the control of cellular growth. May have a role in epidermal development. May act as a receptor for Sonic hedgehog (SHH). This chain is Protein patched homolog 2 (PTCH2), found in Homo sapiens (Human).